The primary structure comprises 188 residues: ATP synthase subunit b (188 aa).

The chain crosses the membrane as a helical span at residues 19-39 (VYVLGATIVSFLVLFLFITYF).

It belongs to the ATPase B chain family. F-type ATPases have 2 components, F(1) - the catalytic core - and F(0) - the membrane proton channel. F(1) has five subunits: alpha(3), beta(3), gamma(1), delta(1), epsilon(1). F(0) has three main subunits: a(1), b(2) and c(10-14). The alpha and beta chains form an alternating ring which encloses part of the gamma chain. F(1) is attached to F(0) by a central stalk formed by the gamma and epsilon chains, while a peripheral stalk is formed by the delta and b chains.

It is found in the cell membrane. F(1)F(0) ATP synthase produces ATP from ADP in the presence of a proton or sodium gradient. F-type ATPases consist of two structural domains, F(1) containing the extramembraneous catalytic core and F(0) containing the membrane proton channel, linked together by a central stalk and a peripheral stalk. During catalysis, ATP synthesis in the catalytic domain of F(1) is coupled via a rotary mechanism of the central stalk subunits to proton translocation. Its function is as follows. Component of the F(0) channel, it forms part of the peripheral stalk, linking F(1) to F(0). The chain is ATP synthase subunit b from Mesomycoplasma hyopneumoniae (strain 7448) (Mycoplasma hyopneumoniae).